A 502-amino-acid polypeptide reads, in one-letter code: Reduced meiotic recombination protein C1442.04c (502 aa).

Phosphoserine is present on residues S328, S330, and S331. Disordered stretches follow at residues 353 to 391 (NDLNNEEPNSVVAEDGSEIITLDENDQSPNEATEKLRDN), 420 to 440 (GSLNNADLSQEPITNDGENVD), and 454 to 502 (ESAF…PSDD). Acidic residues predominate over residues 367–378 (DGSEIITLDEND). Polar residues-rich tracts occupy residues 420–436 (GSLNNADLSQEPITNDG) and 462–477 (GTINSSKRRLSVTTDT).

This sequence belongs to the RMR1 family.

The protein resides in the cytoplasm. It is found in the nucleus. Functionally, required for normal levels of gene conversion events during meiosis. This Schizosaccharomyces pombe (strain 972 / ATCC 24843) (Fission yeast) protein is Reduced meiotic recombination protein C1442.04c.